A 307-amino-acid chain; its full sequence is Transcription factor MYB78 (307 aa).

HTH myb-type domains follow at residues 23-79 (EMDV…RPDV) and 80-130 (RRGN…QKHA). DNA-binding regions (H-T-H motif) lie at residues 51–75 (WNSL…LNYL) and 103–126 (WSKI…RTRV).

The protein resides in the nucleus. The sequence is that of Transcription factor MYB78 from Arabidopsis thaliana (Mouse-ear cress).